Reading from the N-terminus, the 258-residue chain is Trypsin eta (258 aa).

An N-terminal signal peptide occupies residues 1-22; the sequence is MNKVILRILALLFLLGIGAVSA. A propeptide spans 23–27 (activation peptide); that stretch reads QPDGR. Residues 28–258 enclose the Peptidase S1 domain; sequence IVGGADTTNY…YFKDWIASRV (231 aa). C59 and C75 are disulfide-bonded. Catalysis depends on charge relay system residues H74 and D120. Cystine bridges form between C185–C200 and C211–C235. S215 serves as the catalytic Charge relay system.

It belongs to the peptidase S1 family.

It is found in the secreted. The protein localises to the extracellular space. The catalysed reaction is Preferential cleavage: Arg-|-Xaa, Lys-|-Xaa.. This chain is Trypsin eta (etaTry), found in Drosophila erecta (Fruit fly).